A 570-amino-acid polypeptide reads, in one-letter code: MKMSNMLMLTLRESPAEAEIESHKLMLRSGMIRKMASGVYNYMPLGLKALKKVENIIREEMNAAGAQEFLASALLPSELWKESGRWEVFGPEMFKLKDRNEREFCLGPTHEEVFTDFARSEIKSYKQLPVNLYQIQTKYRDERRPRFGMIRSREFVMKDAYSFDKDNEGLDVSYNKMYEAYTKIFKRCNVSCSAVAADSGAMGGSGSAEFMVKSEIGEDEIAFCTECNYAANIEKAPAVPEKADKEELGELKKVETPHAKTIEELVEFFGVDSKKFVKTIIYRAENKVVAVMVRGDREVNETKVKNAVGSVDVELADEKTVKKATGAEVGFAGPIGLDVDYLLIDNEVTYMYNFIVGANETGYHYANANYDRDFKGTVGDFRNAVEGEKCPKCGKPLTIARGIEVGHIFKLGTKYSEAMKAYFVDENGESKPLIMGCYGIGVNRTMSAVVEQHHDDNGIVWPLSVAPYEVIVVPAVFKSEEQMKEAEKLYTELKKIGVDALLDDRNERAGVKFKDADLIGIPMRITVGKKISEGKVEFKCRNSEEVEVIDLDKVIARVEEEFEKNNLALK.

This sequence belongs to the class-II aminoacyl-tRNA synthetase family. ProS type 1 subfamily. In terms of assembly, homodimer.

It is found in the cytoplasm. The catalysed reaction is tRNA(Pro) + L-proline + ATP = L-prolyl-tRNA(Pro) + AMP + diphosphate. Its function is as follows. Catalyzes the attachment of proline to tRNA(Pro) in a two-step reaction: proline is first activated by ATP to form Pro-AMP and then transferred to the acceptor end of tRNA(Pro). As ProRS can inadvertently accommodate and process non-cognate amino acids such as alanine and cysteine, to avoid such errors it has two additional distinct editing activities against alanine. One activity is designated as 'pretransfer' editing and involves the tRNA(Pro)-independent hydrolysis of activated Ala-AMP. The other activity is designated 'posttransfer' editing and involves deacylation of mischarged Ala-tRNA(Pro). The misacylated Cys-tRNA(Pro) is not edited by ProRS. The protein is Proline--tRNA ligase of Clostridium acetobutylicum (strain ATCC 824 / DSM 792 / JCM 1419 / IAM 19013 / LMG 5710 / NBRC 13948 / NRRL B-527 / VKM B-1787 / 2291 / W).